Consider the following 445-residue polypeptide: tRNA(Ile)-lysidine synthase (445 aa).

33–38 (SGGLDS) serves as a coordination point for ATP.

The protein belongs to the tRNA(Ile)-lysidine synthase family.

It localises to the cytoplasm. It carries out the reaction cytidine(34) in tRNA(Ile2) + L-lysine + ATP = lysidine(34) in tRNA(Ile2) + AMP + diphosphate + H(+). Functionally, ligates lysine onto the cytidine present at position 34 of the AUA codon-specific tRNA(Ile) that contains the anticodon CAU, in an ATP-dependent manner. Cytidine is converted to lysidine, thus changing the amino acid specificity of the tRNA from methionine to isoleucine. This Pseudomonas syringae pv. tomato (strain ATCC BAA-871 / DC3000) protein is tRNA(Ile)-lysidine synthase.